A 259-amino-acid polypeptide reads, in one-letter code: Sesquipedalian-2 (259 aa).

The PH domain maps to 17 to 121; the sequence is PADHMGFLRT…WVKVLSRASF (105 aa). A coiled-coil region spans residues 124-149; the sequence is MRLVVRELESQLQDARQSLALQRRSS. A F&amp;H motif is present at residues 223–235; that stretch reads CFSTLHDWYGQEI.

The protein belongs to the sesquipedalian family. Forms homodimers and heterodimers with PHETA1. Interacts with OCRL and INPP5B.

The protein localises to the early endosome. It is found in the recycling endosome. The protein resides in the golgi apparatus. It localises to the trans-Golgi network. Its subcellular location is the cytoplasmic vesicle. The protein localises to the clathrin-coated vesicle. Its function is as follows. Plays a role in endocytic trafficking. Required for receptor recycling from endosomes, both to the trans-Golgi network and the plasma membrane. The sequence is that of Sesquipedalian-2 from Homo sapiens (Human).